We begin with the raw amino-acid sequence, 440 residues long: MKRLARSLYLQVLLAVVLGALVGHLFPATGASLKPLGDGFIKLVKMLIAPIVFATVVTGIAKMGDLRKVGRVGLKGLLYFEVLTTVALAIGLVVARLARPGAGMNVDPATLDTKAIASYTNGAQAHGTVDFLMNVIPRDVADAFARGDILQVLLFSVLFGAALAALKDKGRPVLEFVDGLSLVLFRIVGFVMRLAPVGAFGAMAFTVGKYGIATLLSLGKLIACFYATSALFVVLMLGLVLRWCGLSLFRFLRYIKEEIFVVLGTSSSESALPLMMRKMEKLGCSKPVVGLVVPMGYSFNLDGTSIYLTLATLFIAQATNTHVTLVQELEILAVLLLTSKGAAAVTGGGFITLAATLSAVGNIPVAGLALLLGVDRFMSEARAITNLIGNGVASVAVSRWEGELDQARARAVLAGTVPDEVEPANDPEPPAMAAGLGLHG.

8 helical membrane-spanning segments follow: residues Leu8–Ala28, Phe40–Ile60, Leu74–Val94, Gly147–Lys167, Ile187–Val207, Leu221–Leu241, Val288–Leu308, and Ala354–Val374. The tract at residues Asp419–Gly440 is disordered.

The protein belongs to the dicarboxylate/amino acid:cation symporter (DAACS) (TC 2.A.23) family.

The protein resides in the cell inner membrane. Functionally, responsible for the transport of dicarboxylates such as succinate, fumarate, and malate from the periplasm across the membrane. The protein is C4-dicarboxylate transport protein of Anaeromyxobacter dehalogenans (strain 2CP-C).